Reading from the N-terminus, the 132-residue chain is Evasin P985 (132 aa).

Residues 1–24 form the signal peptide; it reads MHSTIAYVSLLPLALFVAMHGAST. Residues Asn-45, Asn-69, Asn-74, Asn-103, Asn-111, and Asn-117 are each glycosylated (N-linked (GlcNAc...) asparagine). 4 disulfides stabilise this stretch: Cys-48-Cys-70, Cys-66-Cys-109, Cys-83-Cys-114, and Cys-104-Cys-123.

The protein localises to the secreted. In terms of biological role, salivary chemokine-binding protein which binds to host chemokine CCL5. The sequence is that of Evasin P985 from Amblyomma parvum (South American tick).